We begin with the raw amino-acid sequence, 261 residues long: X-box-binding protein 1 (261 aa).

At 1 to 185 (MVVVAAAPNP…VQAQLSPLQN (185 aa)) the chain is on the cytoplasmic side. The disordered stretch occupies residues 44–93 (RGASPEAASGGLPQARKRQRLTHLSPEEKALRRKLKNRVAAQTARDRKKA). Serine 47 and serine 68 each carry phosphoserine. Positions 70 to 133 (EEKALRRKLK…HGLVVENQEL (64 aa)) constitute a bZIP domain. Positions 72 to 94 (KALRRKLKNRVAAQTARDRKKAR) are basic motif. Residues 75-92 (RRKLKNRVAAQTARDRKK) form a nuclear localization signal (NLS); in isoforms 1 and isoform 2 region. The segment at 98–133 (LEQQVVDLEEENQKLLLENQLLREKTHGLVVENQEL) is leucine-zipper. Residues 186 to 203 (ISPWILAVLTLQIQSLIS) traverse the membrane as a helical; Signal-anchor for type II membrane protein segment. At 204–261 (CWAFWTTWTQSCSSNALPQSLPAWRSSQRSTQKDPVPYQPPFLCQWGRHQPSWKPLMN) the chain is on the lumenal side. Residues 235 to 261 (QKDPVPYQPPFLCQWGRHQPSWKPLMN) are necessary for the translational pausing of its own mRNA.

The protein belongs to the bZIP family. In terms of assembly, isoform 2 interacts with SIRT1. Isoform 2 interacts with PIK3R1 and PIK3R2; the interactions are direct and induce translocation of XBP1 isoform 2 into the nucleus and the unfolded protein response (UPR) XBP1-dependent target genes activation in a ER stress- and/or insulin-dependent but PI3K-independent manner. Isoform 2 interacts with FOXO1; the interaction is direct and leads to FOXO1 ubiquitination and degradation via the proteasome pathway in hepatocytes. Isoform 1 interacts with HM13. Isoform 1 interacts with RNF139; the interaction induces ubiquitination and degradation of isoform 1. Isoform 1 interacts (via luminal domain) with DERL1; the interaction obviates the need for ectodomain shedding prior HM13/SPP-mediated XBP1 isoform 1 cleavage. Isoform 1 interacts with isoform 2; the interaction sequesters isoform 2 from the nucleus and enhances isoform 2 degradation in the cytoplasm. Isoform 1 interacts with HDAC3 and AKT1; the interactions occur in endothelial cell (EC) under disturbed flow. Isoform 1 interacts with the oncoprotein FOS. Isoform 2 interacts with ATF6; the interaction occurs in a ER stress-dependent manner and is required for DNA binding to the unfolded protein response element (UPRE). Isoform 2 interacts with PIK3R1; the interaction is direct and induces translocation of XBP1 isoform 2 into the nucleus and the unfolded protein response (UPR) XBP1-dependent target genes activation in a ER stress- and/or insulin-dependent but PI3K-independent manner. Acetylated by EP300; acetylation positively regulates the transcriptional activity of XBP1 isoform 2. Isoform 2 is deacetylated by SIRT1; deacetylation negatively regulates the transcriptional activity of XBP1 isoform 2. In terms of processing, ubiquitinated, leading to proteasome-mediated degradation in response to ER stress. Post-translationally, X-box-binding protein 1, cytoplasmic form and luminal form are produced by intramembrane proteolytic cleavage of ER membrane-anchored isoform 1 triggered by HM13/SPP in a DERL1-RNF139-dependent and VCP/p97-independent manner. X-box-binding protein 1, luminal form is ubiquitinated leading to proteasomal degradation. Expressed in plasma cells in rheumatoid synovium. Over-expressed in primary breast cancer and metastatic breast cancer cells. Isoform 1 and isoform 2 are expressed at higher level in proliferating as compared to confluent quiescent endothelial cells.

Its subcellular location is the endoplasmic reticulum. The protein localises to the nucleus. It is found in the cytoplasm. It localises to the endoplasmic reticulum membrane. The protein resides in the membrane. In terms of biological role, functions as a transcription factor during endoplasmic reticulum (ER) stress by regulating the unfolded protein response (UPR). Required for cardiac myogenesis and hepatogenesis during embryonic development, and the development of secretory tissues such as exocrine pancreas and salivary gland. Involved in terminal differentiation of B lymphocytes to plasma cells and production of immunoglobulins. Modulates the cellular response to ER stress in a PIK3R-dependent manner. Binds to the cis-acting X box present in the promoter regions of major histocompatibility complex class II genes. Involved in VEGF-induced endothelial cell (EC) proliferation and retinal blood vessel formation during embryonic development but also for angiogenesis in adult tissues under ischemic conditions. Also functions as a major regulator of the UPR in obesity-induced insulin resistance and type 2 diabetes for the management of obesity and diabetes prevention. Plays a role in the unconventional cytoplasmic splicing processing of its own mRNA triggered by the endoplasmic reticulum (ER) transmembrane endoribonuclease ERN1: upon ER stress, the emerging XBP1 polypeptide chain, as part of a mRNA-ribosome-nascent chain (R-RNC) complex, cotranslationally recruits its own unprocessed mRNA through transient docking to the ER membrane and translational pausing, therefore facilitating efficient IRE1-mediated XBP1 mRNA isoform 2 production. In endothelial cells (EC), associated with KDR, promotes IRE1-mediated XBP1 mRNA isoform 2 productions in a vascular endothelial growth factor (VEGF)-dependent manner, leading to EC proliferation and angiogenesis. Functions as a negative feed-back regulator of the potent transcription factor XBP1 isoform 2 protein levels through proteasome-mediated degradation, thus preventing the constitutive activation of the ER stress response signaling pathway. Inhibits the transactivation activity of XBP1 isoform 2 in myeloma cells. Acts as a weak transcriptional factor. Together with HDAC3, contributes to the activation of NFE2L2-mediated HMOX1 transcription factor gene expression in a PI(3)K/mTORC2/Akt-dependent signaling pathway leading to EC survival under disturbed flow/oxidative stress. Binds to the ER stress response element (ERSE) upon ER stress. Binds to the consensus 5'-GATGACGTG[TG]N(3)[AT]T-3' sequence related to cAMP responsive element (CRE)-like sequences. Binds the Tax-responsive element (TRE) present in the long terminal repeat (LTR) of T-cell leukemia virus type 1 (HTLV-I) and to the TPA response elements (TRE). Associates preferentially to the HDAC3 gene promoter region in a static flow-dependent manner. Binds to the CDH5/VE-cadherin gene promoter region. Functionally, functions as a stress-inducible potent transcriptional activator during endoplasmic reticulum (ER) stress by inducing unfolded protein response (UPR) target genes via binding to the UPR element (UPRE). Up-regulates target genes encoding ER chaperones and ER-associated degradation (ERAD) components to enhance the capacity of productive folding and degradation mechanism, respectively, in order to maintain the homeostasis of the ER under ER stress. Plays a role in the production of immunoglobulins and interleukin-6 in the presence of stimuli required for plasma cell differentiation. Induces phospholipid biosynthesis and ER expansion. Contributes to the VEGF-induced endothelial cell (EC) growth and proliferation in a Akt/GSK-dependent and/or -independent signaling pathway, respectively, leading to beta-catenin nuclear translocation and E2F2 gene expression. Promotes umbilical vein EC apoptosis and atherosclerotisis development in a caspase-dependent signaling pathway, and contributes to VEGF-induced EC proliferation and angiogenesis in adult tissues under ischemic conditions. Involved in the regulation of endostatin-induced autophagy in EC through BECN1 transcriptional activation. Plays a role as an oncogene by promoting tumor progression: stimulates zinc finger protein SNAI1 transcription to induce epithelial-to-mesenchymal (EMT) transition, cell migration and invasion of breast cancer cells. Involved in adipocyte differentiation by regulating lipogenic gene expression during lactation. Plays a role in the survival of both dopaminergic neurons of the substantia nigra pars compacta (SNpc), by maintaining protein homeostasis and of myeloma cells. Increases insulin sensitivity in the liver as a response to a high carbohydrate diet, resulting in improved glucose tolerance. Also improves glucose homeostasis in an ER stress- and/or insulin-independent manner through both binding and proteasome-induced degradation of the transcription factor FOXO1, hence resulting in suppression of gluconeogenic genes expression and in a reduction of blood glucose levels. Controls the induction of de novo fatty acid synthesis in hepatocytes by regulating the expression of a subset of lipogenic genes in an ER stress- and UPR-independent manner. Associates preferentially to the HDAC3 gene promoter region in a disturbed flow-dependent manner. Binds to the BECN1 gene promoter region. Binds to the CDH5/VE-cadherin gene promoter region. Binds to the ER stress response element (ERSE) upon ER stress. Binds to the 5'-CCACG-3' motif in the PPARG promoter. The polypeptide is X-box-binding protein 1 (Homo sapiens (Human)).